The sequence spans 359 residues: Probable dual-specificity RNA methyltransferase RlmN (359 aa).

Residue glutamate 91 is the Proton acceptor of the active site. Positions 97-329 constitute a Radical SAM core domain; that stretch reads QHYGHSVCVT…KKNGVNCVVR (233 aa). A disulfide bond links cysteine 104 and cysteine 340. [4Fe-4S] cluster contacts are provided by cysteine 111, cysteine 115, and cysteine 118. S-adenosyl-L-methionine-binding positions include 163-164, serine 195, 218-220, and asparagine 296; these read GE and SLH. The active-site S-methylcysteine intermediate is cysteine 340.

It belongs to the radical SAM superfamily. RlmN family. Requires [4Fe-4S] cluster as cofactor.

It is found in the cytoplasm. The catalysed reaction is adenosine(2503) in 23S rRNA + 2 reduced [2Fe-2S]-[ferredoxin] + 2 S-adenosyl-L-methionine = 2-methyladenosine(2503) in 23S rRNA + 5'-deoxyadenosine + L-methionine + 2 oxidized [2Fe-2S]-[ferredoxin] + S-adenosyl-L-homocysteine. It catalyses the reaction adenosine(37) in tRNA + 2 reduced [2Fe-2S]-[ferredoxin] + 2 S-adenosyl-L-methionine = 2-methyladenosine(37) in tRNA + 5'-deoxyadenosine + L-methionine + 2 oxidized [2Fe-2S]-[ferredoxin] + S-adenosyl-L-homocysteine. Functionally, specifically methylates position 2 of adenine 2503 in 23S rRNA and position 2 of adenine 37 in tRNAs. The polypeptide is Probable dual-specificity RNA methyltransferase RlmN (Streptococcus pyogenes serotype M3 (strain ATCC BAA-595 / MGAS315)).